The following is a 43-amino-acid chain: Metallothionein A (43 aa).

A beta region spans residues 1 to 16 (SCAGSCKCKNCRCRSC). C2, C6, C8, C11, C13, C16, C20, C21, C23, C24, C28, C31, C35, and C37 together coordinate a divalent metal cation. Residues 17 to 43 (RKSCCSCCPAGCNNCAKGCVCKEPASS) are alpha.

This sequence belongs to the metallothionein superfamily. Type 1 family.

Metallothioneins have a high content of cysteine residues that bind various heavy metals. This is Metallothionein A from Colinus virginianus (Northern bobwhite).